Consider the following 1374-residue polypeptide: Y' element ATP-dependent helicase YML133C (1374 aa).

Positions 375–552 (EIYMADTPSV…LQRIGLTGLA (178 aa)) constitute a Helicase ATP-binding domain. Residue 388 to 395 (APPGYGKT) participates in ATP binding. In terms of domain architecture, Helicase C-terminal spans 609-758 (KLLLALFEIE…EFYGLESKKG (150 aa)). The segment covering 832–975 (ANASTNATTN…ATTTESTNAS (144 aa)) has biased composition (low complexity). The segment at 832–999 (ANASTNATTN…RFHPVTDINK (168 aa)) is disordered. A compositionally biased stretch (basic and acidic residues) spans 976–999 (AKEDANKDGNAEDNRFHPVTDINK).

It belongs to the helicase family. Yeast subtelomeric Y' repeat subfamily.

Its function is as follows. Catalyzes DNA unwinding and is involved in telomerase-independent telomere maintenance. The protein is Y' element ATP-dependent helicase YML133C of Saccharomyces cerevisiae (strain ATCC 204508 / S288c) (Baker's yeast).